Here is a 38-residue protein sequence, read N- to C-terminus: Large ribosomal subunit protein bL36B (38 aa).

It belongs to the bacterial ribosomal protein bL36 family.

This Prochlorococcus marinus (strain MIT 9515) protein is Large ribosomal subunit protein bL36B.